The primary structure comprises 163 residues: Phosphopantetheine adenylyltransferase (163 aa).

Position 9 (Ser-9) interacts with substrate. Residues 9–10 (SF) and His-17 contribute to the ATP site. Substrate is bound by residues Lys-41, Thr-73, and Arg-87. ATP-binding positions include 88–90 (GLR), Glu-98, and 123–129 (YSYLSSS).

Belongs to the bacterial CoaD family. Homohexamer. Requires Mg(2+) as cofactor.

Its subcellular location is the cytoplasm. The catalysed reaction is (R)-4'-phosphopantetheine + ATP + H(+) = 3'-dephospho-CoA + diphosphate. The protein operates within cofactor biosynthesis; coenzyme A biosynthesis; CoA from (R)-pantothenate: step 4/5. Reversibly transfers an adenylyl group from ATP to 4'-phosphopantetheine, yielding dephospho-CoA (dPCoA) and pyrophosphate. The chain is Phosphopantetheine adenylyltransferase from Lachnoclostridium phytofermentans (strain ATCC 700394 / DSM 18823 / ISDg) (Clostridium phytofermentans).